A 776-amino-acid chain; its full sequence is Meiotic expression up-regulated protein 1/2 (776 aa).

Coiled coils occupy residues 87–122 (YVLKVAEEKIEKLLKENGTLKNEEKCLRMQIVAQEE), 173–227 (FSEL…DLKE), 265–307 (YKVE…NDEE), 362–430 (KMSQ…RNNS), and 496–595 (INNQ…NTEL).

In Schizosaccharomyces pombe (strain 972 / ATCC 24843) (Fission yeast), this protein is Meiotic expression up-regulated protein 1/2 (meu1).